A 152-amino-acid polypeptide reads, in one-letter code: Large ribosomal subunit protein bL9 (152 aa).

The protein belongs to the bacterial ribosomal protein bL9 family.

In terms of biological role, binds to the 23S rRNA. The chain is Large ribosomal subunit protein bL9 from Synechococcus sp. (strain CC9902).